The sequence spans 332 residues: Glycerol-3-phosphate dehydrogenase [NAD(P)+] (332 aa).

3 residues coordinate NADPH: Trp13, Lys34, and Lys108. Sn-glycerol 3-phosphate-binding residues include Lys108, Gly136, and Ser138. Ala140 provides a ligand contact to NADPH. Positions 191, 244, 254, 255, and 256 each coordinate sn-glycerol 3-phosphate. The Proton acceptor role is filled by Lys191. NADPH is bound at residue Arg255. Residues Val279 and Glu281 each contribute to the NADPH site.

Belongs to the NAD-dependent glycerol-3-phosphate dehydrogenase family.

It is found in the cytoplasm. It carries out the reaction sn-glycerol 3-phosphate + NAD(+) = dihydroxyacetone phosphate + NADH + H(+). The catalysed reaction is sn-glycerol 3-phosphate + NADP(+) = dihydroxyacetone phosphate + NADPH + H(+). Its pathway is membrane lipid metabolism; glycerophospholipid metabolism. Functionally, catalyzes the reduction of the glycolytic intermediate dihydroxyacetone phosphate (DHAP) to sn-glycerol 3-phosphate (G3P), the key precursor for phospholipid synthesis. The protein is Glycerol-3-phosphate dehydrogenase [NAD(P)+] of Francisella tularensis subsp. tularensis (strain FSC 198).